A 145-amino-acid polypeptide reads, in one-letter code: MIALIQRATRASVTVEDEVTGEIGPGLLVLLGVEKEDDEQKANRLCERVLGYRIFSDADGKMNLNVQQAGGSVLVVSQFTLAADTERGMRPSFSGGAAPDRAQALYEYFVERCRQQAINTQTGRFAADMQVELVNDGPVTFWLQV.

Positions 137–138 match the Gly-cisPro motif, important for rejection of L-amino acids motif; sequence GP.

It belongs to the DTD family. Homodimer.

Its subcellular location is the cytoplasm. The enzyme catalyses glycyl-tRNA(Ala) + H2O = tRNA(Ala) + glycine + H(+). It carries out the reaction a D-aminoacyl-tRNA + H2O = a tRNA + a D-alpha-amino acid + H(+). An aminoacyl-tRNA editing enzyme that deacylates mischarged D-aminoacyl-tRNAs. Also deacylates mischarged glycyl-tRNA(Ala), protecting cells against glycine mischarging by AlaRS. Acts via tRNA-based rather than protein-based catalysis; rejects L-amino acids rather than detecting D-amino acids in the active site. By recycling D-aminoacyl-tRNA to D-amino acids and free tRNA molecules, this enzyme counteracts the toxicity associated with the formation of D-aminoacyl-tRNA entities in vivo and helps enforce protein L-homochirality. In Salmonella paratyphi A (strain AKU_12601), this protein is D-aminoacyl-tRNA deacylase.